The following is a 343-amino-acid chain: Phosphate acyltransferase (343 aa).

This sequence belongs to the PlsX family. Homodimer. Probably interacts with PlsY.

The protein localises to the cytoplasm. The enzyme catalyses a fatty acyl-[ACP] + phosphate = an acyl phosphate + holo-[ACP]. It functions in the pathway lipid metabolism; phospholipid metabolism. In terms of biological role, catalyzes the reversible formation of acyl-phosphate (acyl-PO(4)) from acyl-[acyl-carrier-protein] (acyl-ACP). This enzyme utilizes acyl-ACP as fatty acyl donor, but not acyl-CoA. The polypeptide is Phosphate acyltransferase (Acidovorax sp. (strain JS42)).